A 274-amino-acid polypeptide reads, in one-letter code: Rhamnulose-1-phosphate aldolase (274 aa).

The active site involves Glu-117. Zn(2+) contacts are provided by His-141, His-143, and His-212.

It belongs to the aldolase class II family. RhaD subfamily. In terms of assembly, homotetramer. It depends on Zn(2+) as a cofactor.

The protein localises to the cytoplasm. It carries out the reaction L-rhamnulose 1-phosphate = (S)-lactaldehyde + dihydroxyacetone phosphate. Its pathway is carbohydrate degradation; L-rhamnose degradation; glycerone phosphate from L-rhamnose: step 3/3. Functionally, catalyzes the reversible cleavage of L-rhamnulose-1-phosphate to dihydroxyacetone phosphate (DHAP) and L-lactaldehyde. This is Rhamnulose-1-phosphate aldolase from Escherichia coli (strain SE11).